Consider the following 395-residue polypeptide: Nicotinamide/nicotinic acid mononucleotide adenylyltransferase 2 (395 aa).

2 disordered regions span residues methionine 1 to isoleucine 34 and lysine 62 to aspartate 102. The span at phenylalanine 9–proline 24 shows a compositional bias: pro residues. A phosphoserine mark is found at serine 85, serine 89, and serine 90. Residues serine 167 and phenylalanine 168 each contribute to the NAD(+) site. Residues histidine 175 and arginine 209 each coordinate ATP. Residues threonine 247, glycine 282, aspartate 284, tryptophan 295, arginine 314, and asparagine 345 each coordinate NAD(+). An ATP-binding site is contributed by threonine 350 to arginine 353.

This sequence belongs to the eukaryotic NMN adenylyltransferase family. It depends on Co(2+) as a cofactor.

The protein resides in the nucleus. It catalyses the reaction beta-nicotinamide D-ribonucleotide + ATP + H(+) = diphosphate + NAD(+). It carries out the reaction nicotinate beta-D-ribonucleotide + ATP + H(+) = deamido-NAD(+) + diphosphate. The protein operates within cofactor biosynthesis; NAD(+) biosynthesis; deamido-NAD(+) from nicotinate D-ribonucleotide: step 1/1. Its pathway is cofactor biosynthesis; NAD(+) biosynthesis; NAD(+) from nicotinamide D-ribonucleotide: step 1/1. Its function is as follows. Catalyzes the formation of NAD(+) from nicotinamide mononucleotide (NMN) and ATP. Can also use the deamidated form; nicotinic acid mononucleotide (NaMN) as substrate to form deamido-NAD(+) (NaAD). Key enzyme in both de novo and salvage pathways for NAD(+) biosynthesis. Predominantly acts in the salvage pathways via NMN. The protein is Nicotinamide/nicotinic acid mononucleotide adenylyltransferase 2 of Saccharomyces cerevisiae (strain ATCC 204508 / S288c) (Baker's yeast).